Reading from the N-terminus, the 325-residue chain is ADP-ribose glycohydrolase MACROD1 (325 aa).

Positions 21-55 are disordered; sequence LGAPRPWPGPSPGATRTRSSACGPPASLSAHHPRA. 3 positions are modified to N6-succinyllysine: Lys96, Lys103, and Lys129. Lys138 is covalently cross-linked (Glycyl lysine isopeptide (Lys-Gly) (interchain with G-Cter in SUMO2)). Residues 141–322 form the Macro domain; that stretch reads EPKYKKDKQL…IYRERLPHYF (182 aa). 159–161 lines the substrate pocket; the sequence is GDI. Residue Lys163 is modified to N6-acetyllysine. Residues 172 to 174, 179 to 184, 267 to 273, and Phe306 each bind substrate; these read AAN, GGGGVD, and ISTGVFG.

Belongs to the MacroD-type family. MacroD1/2-like subfamily. Interacts with ESR1; Interacts in a manner that is estrogen independent but is enhanced by estrogen. Interacts (via macro domain) with AR.

Its subcellular location is the nucleus. It catalyses the reaction 3''-O-acetyl-ADP-D-ribose + H2O = ADP-D-ribose + acetate + H(+). The catalysed reaction is 2''-O-acetyl-ADP-D-ribose + H2O = ADP-D-ribose + acetate + H(+). It carries out the reaction 4-O-(ADP-D-ribosyl)-L-aspartyl-[protein] + H2O = L-aspartyl-[protein] + ADP-D-ribose + H(+). The enzyme catalyses 5-O-(ADP-D-ribosyl)-L-glutamyl-[protein] + H2O = L-glutamyl-[protein] + ADP-D-ribose + H(+). It catalyses the reaction alpha-NAD(+) + H2O = ADP-D-ribose + nicotinamide + H(+). With respect to regulation, subject to competitive inhibition by the product ADP-ribose. In terms of biological role, removes ADP-ribose from aspartate and glutamate residues in proteins bearing a single ADP-ribose moiety. Inactive towards proteins bearing poly-ADP-ribose. Deacetylates O-acetyl-ADP ribose, a signaling molecule generated by the deacetylation of acetylated lysine residues in histones and other proteins. Plays a role in estrogen signaling. Binds to androgen receptor (AR) and amplifies the transactivation function of AR in response to androgen. May play an important role in carcinogenesis and/or progression of hormone-dependent cancers by feed-forward mechanism that activates ESR1 transactivation. Could be an ESR1 coactivator, providing a positive feedback regulatory loop for ESR1 signal transduction. Could be involved in invasive growth by down-regulating CDH1 in endometrial cancer cells. Enhances ESR1-mediated transcription activity. The polypeptide is ADP-ribose glycohydrolase MACROD1 (MACROD1) (Bos taurus (Bovine)).